A 351-amino-acid polypeptide reads, in one-letter code: L-threonine 3-dehydrogenase (351 aa).

Residue Cys42 participates in Zn(2+) binding. Residues Thr44 and His47 each act as charge relay system in the active site. Residues His67, Glu68, Cys97, Cys100, Cys103, and Cys111 each coordinate Zn(2+). NAD(+)-binding positions include Ile179, Asp199, Arg204, 266–268 (LGL), and 291–292 (IT).

It belongs to the zinc-containing alcohol dehydrogenase family. In terms of assembly, homotetramer. The cofactor is Zn(2+).

The protein resides in the cytoplasm. The enzyme catalyses L-threonine + NAD(+) = (2S)-2-amino-3-oxobutanoate + NADH + H(+). Its pathway is amino-acid degradation; L-threonine degradation via oxydo-reductase pathway; glycine from L-threonine: step 1/2. Catalyzes the NAD(+)-dependent oxidation of L-threonine to 2-amino-3-ketobutyrate. The chain is L-threonine 3-dehydrogenase from Symbiobacterium thermophilum (strain DSM 24528 / JCM 14929 / IAM 14863 / T).